The chain runs to 212 residues: Large ribosomal subunit protein uL3 (212 aa).

Residues 135–155 are compositionally biased toward polar residues; sequence ATHGNSVSHRAHGSTGQNQSP. Residues 135-162 form a disordered region; it reads ATHGNSVSHRAHGSTGQNQSPGKVFKGK. Glutamine 153 bears the N5-methylglutamine mark.

This sequence belongs to the universal ribosomal protein uL3 family. Part of the 50S ribosomal subunit. Forms a cluster with proteins L14 and L19. Methylated by PrmB.

One of the primary rRNA binding proteins, it binds directly near the 3'-end of the 23S rRNA, where it nucleates assembly of the 50S subunit. The polypeptide is Large ribosomal subunit protein uL3 (Psychrobacter arcticus (strain DSM 17307 / VKM B-2377 / 273-4)).